A 484-amino-acid polypeptide reads, in one-letter code: tRNA sulfurtransferase (484 aa).

One can recognise a THUMP domain in the interval 63-167 (QAFGERLACI…RDNLYMVTKR (105 aa)). Residues 185–186 (LI), Lys-267, Gly-289, and Gln-298 each bind ATP. Cys-346 and Cys-458 are joined by a disulfide. One can recognise a Rhodanese domain in the interval 406–484 (IDTNQVVIDI…GYTNVKVYRP (79 aa)). The active-site Cysteine persulfide intermediate is Cys-458.

This sequence belongs to the ThiI family.

It is found in the cytoplasm. It catalyses the reaction [ThiI sulfur-carrier protein]-S-sulfanyl-L-cysteine + a uridine in tRNA + 2 reduced [2Fe-2S]-[ferredoxin] + ATP + H(+) = [ThiI sulfur-carrier protein]-L-cysteine + a 4-thiouridine in tRNA + 2 oxidized [2Fe-2S]-[ferredoxin] + AMP + diphosphate. The catalysed reaction is [ThiS sulfur-carrier protein]-C-terminal Gly-Gly-AMP + S-sulfanyl-L-cysteinyl-[cysteine desulfurase] + AH2 = [ThiS sulfur-carrier protein]-C-terminal-Gly-aminoethanethioate + L-cysteinyl-[cysteine desulfurase] + A + AMP + 2 H(+). Its pathway is cofactor biosynthesis; thiamine diphosphate biosynthesis. In terms of biological role, catalyzes the ATP-dependent transfer of a sulfur to tRNA to produce 4-thiouridine in position 8 of tRNAs, which functions as a near-UV photosensor. Also catalyzes the transfer of sulfur to the sulfur carrier protein ThiS, forming ThiS-thiocarboxylate. This is a step in the synthesis of thiazole, in the thiamine biosynthesis pathway. The sulfur is donated as persulfide by IscS. The sequence is that of tRNA sulfurtransferase from Shewanella baltica (strain OS155 / ATCC BAA-1091).